The chain runs to 360 residues: DNA replication and repair protein RecF (360 aa).

30–37 (GQNGSGKT) is a binding site for ATP.

It belongs to the RecF family.

The protein localises to the cytoplasm. Its function is as follows. The RecF protein is involved in DNA metabolism; it is required for DNA replication and normal SOS inducibility. RecF binds preferentially to single-stranded, linear DNA. It also seems to bind ATP. The sequence is that of DNA replication and repair protein RecF from Shewanella sp. (strain MR-4).